The following is a 49-amino-acid chain: Large ribosomal subunit protein bL33 (49 aa).

This sequence belongs to the bacterial ribosomal protein bL33 family.

This is Large ribosomal subunit protein bL33 from Pelotomaculum thermopropionicum (strain DSM 13744 / JCM 10971 / SI).